We begin with the raw amino-acid sequence, 83 residues long: MYB-like transcription factor ETC1 (83 aa).

A Myb-like domain is found at 35-72 (AQEEEDLICRMYKLVGERWDLIAGRIPGRTAEEIERFW).

In terms of tissue distribution, expressed in developing trichomes and non-root hair cells.

The protein localises to the nucleus. MYB-type transcription factor involved in epidermal cell fate specification. Acts as a negative regulator of trichome development, by mediating lateral inhibition. Promotes the formation of hair developing cells in H position in root epidermis, probably by inhibiting non-hair cell formation. In Arabidopsis thaliana (Mouse-ear cress), this protein is MYB-like transcription factor ETC1 (ETC1).